A 178-amino-acid polypeptide reads, in one-letter code: Large ribosomal subunit protein bL17 (178 aa).

Over residues 126–139 (DRARRVAASKKAEE) the composition is skewed to basic and acidic residues. Residues 126 to 178 (DRARRVAASKKAEEQAPAAEAEEQAPAAEAEAPAADAAAEAKADEAAEDKKDA) form a disordered region. A compositionally biased stretch (low complexity) spans 140-163 (QAPAAEAEEQAPAAEAEAPAADAA). Residues 164–178 (AEAKADEAAEDKKDA) are compositionally biased toward basic and acidic residues.

Belongs to the bacterial ribosomal protein bL17 family. As to quaternary structure, part of the 50S ribosomal subunit. Contacts protein L32.

In Nocardia farcinica (strain IFM 10152), this protein is Large ribosomal subunit protein bL17.